An 80-amino-acid chain; its full sequence is Defensin-like protein 18 (80 aa).

A signal peptide spans 1 to 29 (MAKFCTTITLILVALVLFADFEAPTIVKA). Intrachain disulfides connect Cys32/Cys80, Cys43/Cys64, Cys49/Cys74, and Cys53/Cys76.

This sequence belongs to the DEFL family.

It is found in the secreted. In terms of biological role, confers broad-spectrum resistance to pathogens. The chain is Defensin-like protein 18 (PDF1.5) from Arabidopsis thaliana (Mouse-ear cress).